The sequence spans 353 residues: UDP-xylose transporter 2 (353 aa).

The next 10 helical transmembrane spans lie at 7 to 27 (FQLGTIGALSLSVVSSVSIVI), 31 to 51 (ALISTLGFTFATTLTSWHLLV), 75 to 95 (VLGFGVLNGISIGLLNLSLGF), 100 to 120 (FYQMTKLAIIPCTVVLETIFF), 132 to 152 (LVILLLGVGIATVTDLQLNML), 154 to 174 (SVLSLLAVITTCVAQIMTNTI), 194 to 214 (AITLFVTGPFLDGLLTNQNVF), 224 to 244 (FFIVLSCLISVSVNFSTFLVI), 250 to 270 (VTYQVLGHLKTCLVLAFGYLL), and 280 to 300 (ILGILVAVIGMVLYSYYCTLE). A disordered region spans residues 308–353 (TSTQLPQMDENEKDPLVSAENGSGLISDNGVQKQDPVWNSNKDFQA). Residues 327 to 353 (ENGSGLISDNGVQKQDPVWNSNKDFQA) are compositionally biased toward polar residues. The residue at position 334 (Ser334) is a Phosphoserine.

This sequence belongs to the TPT transporter family. TPT (TC 2.A.7.9) subfamily. Ubiquitous.

The protein localises to the golgi apparatus membrane. Functionally, nucleotide-sugar transporter that transports UDP-xylose and UMP in a strict counter-exchange mode. This chain is UDP-xylose transporter 2, found in Arabidopsis thaliana (Mouse-ear cress).